We begin with the raw amino-acid sequence, 215 residues long: Probable phosphoglycerate mutase GpmB (215 aa).

Residues 8–15 (RHGETQWN), 21–22 (QG), R58, 82–85 (ELDM), 104–105 (RR), and 151–152 (GI) contribute to the substrate site. H9 serves as the catalytic Tele-phosphohistidine intermediate. E82 serves as the catalytic Proton donor/acceptor.

Belongs to the phosphoglycerate mutase family. GpmB subfamily.

It catalyses the reaction (2R)-2-phosphoglycerate = (2R)-3-phosphoglycerate. It participates in carbohydrate degradation; glycolysis; pyruvate from D-glyceraldehyde 3-phosphate: step 3/5. The protein is Probable phosphoglycerate mutase GpmB of Enterobacter sp. (strain 638).